We begin with the raw amino-acid sequence, 73 residues long: U-scoloptoxin(15)-Sm3a (73 aa).

Residues 1–23 (MERKVFLLLFVIVLLTLPGFMSA) form the signal peptide.

Belongs to the scoloptoxin-15 family. Post-translationally, contains 2 disulfide bonds. As to expression, expressed by the venom gland.

It localises to the secreted. The protein is U-scoloptoxin(15)-Sm3a of Scolopendra morsitans (Tanzanian blue ringleg centipede).